We begin with the raw amino-acid sequence, 462 residues long: Chromosomal replication initiator protein DnaA (462 aa).

Positions 1–84 (MAVSLWQQCI…RFDIGSRPSA (84 aa)) are domain I, interacts with DnaA modulators. Residues 84–125 (AKKPSVPAPIAPTRVANTQTKATVGTTFNVQAEPMANANHRS) form a domain II region. The domain III, AAA+ region stretch occupies residues 126–342 (NINPSYQFDN…GALNRVIANA (217 aa)). Gly170, Gly172, Lys173, and Thr174 together coordinate ATP. The segment at 343-462 (NFTGRPITID…YANLIRTLSS (120 aa)) is domain IV, binds dsDNA.

This sequence belongs to the DnaA family. In terms of assembly, oligomerizes as a right-handed, spiral filament on DNA at oriC.

Its subcellular location is the cytoplasm. Plays an essential role in the initiation and regulation of chromosomal replication. ATP-DnaA binds to the origin of replication (oriC) to initiate formation of the DNA replication initiation complex once per cell cycle. Binds the DnaA box (a 9 base pair repeat at the origin) and separates the double-stranded (ds)DNA. Forms a right-handed helical filament on oriC DNA; dsDNA binds to the exterior of the filament while single-stranded (ss)DNA is stabiized in the filament's interior. The ATP-DnaA-oriC complex binds and stabilizes one strand of the AT-rich DNA unwinding element (DUE), permitting loading of DNA polymerase. After initiation quickly degrades to an ADP-DnaA complex that is not apt for DNA replication. Binds acidic phospholipids. The polypeptide is Chromosomal replication initiator protein DnaA (Shewanella baltica (strain OS195)).